Consider the following 601-residue polypeptide: Glutathione-regulated potassium-efflux system protein KefB (601 aa).

Transmembrane regions (helical) follow at residues 5–25 (SLLMAGLLYLCAAVIAVPLAA), 29–49 (IGAVLGYLLAGIAIGPWGLGF), 55–75 (EILHFSELGVVFLMFIIGLEL), 87–107 (IFGVGAAQVLLSAAVLGGLLW), 115–135 (AAIIGGIGLAMSSTAMALQLM), 152–172 (VLLFQDLAVIPALALVPLLAG), 180–202 (WMKLGMKVLAFAGMLVGGRYLLR), 207–227 (FIAASGVREVFTAAALLLVLG), 230–250 (LFMEALGLSMALGTFIAGILL), 268–288 (GLLLGLFFISVGMALNLGVLY), 291–311 (ILEILAGVVMLVTVKTAVLYL), 324–344 (LQFSGVLSQGGEFAFVLFSAA), and 356–376 (PLLLVTVTLSMMTTPLLMQGV). Residues 400–519 (KPQVIVVGFG…AGVTQFSRET (120 aa)) enclose the RCK N-terminal domain.

This sequence belongs to the monovalent cation:proton antiporter 2 (CPA2) transporter (TC 2.A.37) family. KefB subfamily. Interacts with the regulatory subunit KefG.

Its subcellular location is the cell inner membrane. Its function is as follows. Pore-forming subunit of a potassium efflux system that confers protection against electrophiles. Catalyzes K(+)/H(+) antiport. This is Glutathione-regulated potassium-efflux system protein KefB from Erwinia tasmaniensis (strain DSM 17950 / CFBP 7177 / CIP 109463 / NCPPB 4357 / Et1/99).